We begin with the raw amino-acid sequence, 625 residues long: MSQESDNNKRLVALVPMPSDPPFNTRRAYTSEDEAWKSYLENPLTAATKAMMSINGDEDSAAALGLLYDYYKVPRDKRLLSVSKASDSQEDQDKRNCLGTSEAQINLSGGENRVQVLKTVPVNLCLSQDHMENSKREQYSVSITESSAVIPVSGITVVKAEDFTPVFMAPPVHYPRADSEEQRVVIFEQTQYDLPSIASHSSYLKDDQRSTPDSTYSESFKDGASEKFRSTSVGADEYTYDQTGSGTFQYTLEATKSLRQKQGEGPMTYLNKGQFYAITLSETGDNKCFRHPISKVRSVVMVVFSEDKNRDEQLKYWKYWHSRQHTAKQRVLDIADYKESFNTIGNIEEIAYNAVSFTWDVNEEAKIFITVNCLSTDFSSQKGVKGLPLMIQIDTYSYNNRSNKPIHRAYCQIKVFCDKGAERKIRDEERKQNRKKGKGQASQAQCNNSSDGKMAAIPLQKKSDITYFKTMPDLHSQPVLFIPDVHFANLQRTGQVYYNTDDEREGSSVLVKRMFRPMEEEFGPTPSKQIKEENVKRVLLYVRKENDDVFDALMLKSPTVKGLMEALSEKYGLPVEKITKLYKKSKKGILVNMDDNIIEHYSNEDTFILNMESMVEGFKITLMEI.

The transcription activation stretch occupies residues 1-93 (MSQESDNNKR…KASDSQEDQD (93 aa)). Disordered regions lie at residues 198 to 222 (ASHS…SFKD) and 428 to 452 (EERK…SSDG). The region spanning 244–482 (GSGTFQYTLE…DLHSQPVLFI (239 aa)) is the Grh/CP2 DB domain. Positions 440-451 (QASQAQCNNSSD) are enriched in polar residues.

Belongs to the grh/CP2 family. Grainyhead subfamily. Homodimer, also forms heterodimers with GRHL1 or GRHL3.

It localises to the nucleus. The protein resides in the membrane. Functionally, transcription factor playing an important role in primary neurulation and in epithelial development. Binds directly to the consensus DNA sequence 5'-AACCGGTT-3' acting as an activator and repressor on distinct target genes. During embryogenesis, plays unique and cooperative roles with GRHL3 in establishing distinct zones of primary neurulation. Essential for closure 3 (rostral end of the forebrain), functions cooperatively with GRHL3 in closure 2 (forebrain/midbrain boundary) and posterior neuropore closure. Regulates epithelial morphogenesis acting as a target gene-associated transcriptional activator of apical junctional complex components. Up-regulates of CLDN3 and CLDN4, as well as of RAB25, which increases the CLDN4 protein and its localization at tight junctions. Comprises an essential component of the transcriptional machinery that establishes appropriate expression levels of CLDN4 and CDH1 in different types of epithelia. Exhibits functional redundancy with GRHL3 in epidermal morphogenetic events such as eyelid fusion and epidermal wound repair. In lung, forms a regulatory loop with NKX2-1 that coordinates lung epithelial cell morphogenesis and differentiation. In keratinocytes, plays a role in telomerase activation during cellular proliferation, regulates TERT expression by binding to TERT promoter region and inhibiting DNA methylation at the 5'-CpG island, possibly by interfering with DNMT1 enzyme activity. In addition, impairs keratinocyte differentiation and epidermal function by inhibiting the expression of genes clustered at the epidermal differentiation complex (EDC) as well as GRHL1 and GRHL3 through epigenetic mechanisms. This is Grainyhead-like protein 2 homolog (Grhl2) from Mus musculus (Mouse).